A 546-amino-acid chain; its full sequence is DNA replication factor Cdt1 (546 aa).

Basic and acidic residues predominate over residues methionine 1–alanine 11. The PIP-box K+4 motif signature appears at methionine 1–proline 23. Disordered regions lie at residues methionine 1–aspartate 118 and serine 143–glutamate 165. Residues arginine 28–serine 45 show a composition bias toward low complexity. Threonine 29 carries the phosphothreonine; by MAPK8 modification. A Phosphoserine modification is found at serine 31. Residues arginine 68 to leucine 70 carry the Cyclin-binding motif motif. Residue serine 93 is modified to Phosphoserine; by MAPK8. The tract at residues serine 150–tyrosine 190 is interaction with GMNN. Over residues alanine 155–glycine 164 the composition is skewed to basic and acidic residues. Residue serine 318 is modified to Phosphoserine; by MAPK8. Serine 380 and serine 394 each carry phosphoserine. The disordered stretch occupies residues alanine 383–leucine 415. Over residues proline 392–alanine 410 the composition is skewed to pro residues. Residues leucine 451 to leucine 546 are interaction with LRWD1.

Belongs to the Cdt1 family. As to quaternary structure, interacts with GMNN; the interaction inhibits binding of the MCM complex to origins of replication. Interacts with MCM6. Interacts with CDC6; are mutually dependent on one another for loading MCM complexes onto chromatin. Interacts with PCNA. Interacts with LRWD1 during G1 phase and during mitosis. Interacts with NDC80 subunit of the NDC80 complex; leading to kinetochore localization. Interacts with GRWD1; origin binding of GRWD1 is dependent on CDT1. Interacts with KAT7. Interacts with ubiquitin-binding protein FAF1; the interaction is likely to promote CDT1 degradation. In terms of processing, two independent E3 ubiquitin ligase complexes, SCF(SKP2) and the DCX(DTL) complex, mediated CDT1 degradation in S phase. Ubiquitinated by the DCX(DTL) complex, in response to DNA damage, leading to its degradation. Ubiquitination by the DCX(DTL) complex is necessary to ensure proper cell cycle regulation and is PCNA-dependent: interacts with PCNA via its PIP-box, while the presence of the containing the 'K+4' motif in the PIP box, recruit the DCX(DTL) complex, leading to its degradation. Phosphorylation at Thr-29 by CDK2 targets CDT1 for ubiquitination by SCF(SKP2) E3 ubiquitin ligase and subsequent degradation. The interaction with GMNN protects it against ubiquitination. Deubiquitinated by USP37. Ubiquitinated and degraded by the SCF(FBXO31) complex during the G2 phase to prevent re-replication. Post-translationally, phosphorylation by cyclin A-dependent kinases at Thr-29 targets CDT1 for ubiquitynation by SCF(SKP2) E3 ubiquitin ligase and subsequent degradation. Phosphorylated at Thr-29 by MAPK8/JNK1, which blocks replication licensing in response to stress. Binding to GMNN is not affected by phosphorylation.

The protein resides in the nucleus. It is found in the chromosome. It localises to the centromere. Its subcellular location is the kinetochore. Functionally, required for both DNA replication and mitosis. DNA replication licensing factor, required for pre-replication complex assembly. Cooperates with CDC6 and the origin recognition complex (ORC) during G1 phase of the cell cycle to promote the loading of the mini-chromosome maintenance (MCM) complex onto DNA to generate pre-replication complexes (pre-RC). Required also for mitosis by promoting stable kinetochore-microtubule attachments. Potential oncogene. The chain is DNA replication factor Cdt1 from Homo sapiens (Human).